The primary structure comprises 509 residues: Hyaluronidase PH-20 (509 aa).

The N-terminal stretch at 1 to 35 is a signal peptide; it reads MGVLKFKHIFFRSFVKSSGVSQIVFTFLLIPCCLT. 2 cysteine pairs are disulfide-bonded: cysteine 60–cysteine 351 and cysteine 224–cysteine 238. N-linked (GlcNAc...) asparagine glycosylation is present at asparagine 82. Residue glutamate 148 is the Proton donor of the active site. N-linked (GlcNAc...) asparagine glycans are attached at residues asparagine 166, asparagine 235, asparagine 254, and asparagine 368. 3 cysteine pairs are disulfide-bonded: cysteine 376–cysteine 387, cysteine 381–cysteine 435, and cysteine 437–cysteine 464. Asparagine 393 carries N-linked (GlcNAc...) asparagine glycosylation. Residue serine 490 is the site of GPI-anchor amidated serine attachment. Positions 491 to 509 are cleaved as a propeptide — removed in mature form; the sequence is ATMFIVSILFLIISSVASL.

This sequence belongs to the glycosyl hydrolase 56 family. Post-translationally, N-glycosylated. As to expression, testis.

Its subcellular location is the cell membrane. It catalyses the reaction Random hydrolysis of (1-&gt;4)-linkages between N-acetyl-beta-D-glucosamine and D-glucuronate residues in hyaluronate.. Its function is as follows. Involved in sperm-egg adhesion. Upon fertilization sperm must first penetrate a layer of cumulus cells that surrounds the egg before reaching the zona pellucida. The cumulus cells are embedded in a matrix containing hyaluronic acid which is formed prior to ovulation. This protein aids in penetrating the layer of cumulus cells by digesting hyaluronic acid. This is Hyaluronidase PH-20 (SPAM1) from Homo sapiens (Human).